We begin with the raw amino-acid sequence, 299 residues long: Cysteine synthase B (299 aa).

Lys-40 bears the N6-(pyridoxal phosphate)lysine mark. Residues Asn-70, 174–178 (GTGGT), and Ser-261 contribute to the pyridoxal 5'-phosphate site.

This sequence belongs to the cysteine synthase/cystathionine beta-synthase family. It depends on pyridoxal 5'-phosphate as a cofactor.

The enzyme catalyses O-acetyl-L-serine + hydrogen sulfide = L-cysteine + acetate. The protein operates within amino-acid biosynthesis; L-cysteine biosynthesis; L-cysteine from L-serine: step 2/2. This chain is Cysteine synthase B (cysM), found in Campylobacter jejuni subsp. jejuni serotype O:2 (strain ATCC 700819 / NCTC 11168).